The following is a 508-amino-acid chain: Phosphoglycerate kinase A (508 aa).

(2R)-3-phosphoglycerate-binding residues include Val32, Asp33, Phe34, Asn35, Arg48, Ser70, His71, Gly73, Arg74, Arg224, His260, and Arg261. 2 residues coordinate ADP: Gly306 and Ala307. Residue Gly306 participates in CDP binding. 2 residues coordinate AMP: Ala307 and Lys308. Residue Ala307 participates in ATP binding. Ala307 contributes to the Mg(2+) binding site. (2R)-3-phosphoglycerate is bound at residue Lys308. Glu311 provides a ligand contact to CDP. A Mg(2+)-binding site is contributed by Glu311. ADP-binding residues include Lys312 and Gly330. Lys312 lines the AMP pocket. Lys312 serves as a coordination point for ATP. CDP is bound at residue Gly330. AMP is bound by residues Ala331 and Ala403. ATP contacts are provided by Ala331 and Ala403. ADP contacts are provided by Ala403 and Asn427. Residues Gly428 and Phe433 each contribute to the CDP site. Positions 433, 434, 466, and 467 each coordinate ADP. Glu434 serves as a coordination point for AMP. The ATP site is built by Glu434, Glu466, and Ser467. Glu466 provides a ligand contact to Mg(2+).

Belongs to the phosphoglycerate kinase family. As to quaternary structure, monomer. Mg(2+) is required as a cofactor.

The enzyme catalyses (2R)-3-phosphoglycerate + ATP = (2R)-3-phospho-glyceroyl phosphate + ADP. It functions in the pathway carbohydrate degradation; glycolysis; pyruvate from D-glyceraldehyde 3-phosphate: step 2/5. The protein is Phosphoglycerate kinase A of Trypanosoma brucei brucei.